The following is a 169-amino-acid chain: Crossover junction endodeoxyribonuclease RuvC (169 aa).

Active-site residues include D7, E67, and D140. Mg(2+) is bound by residues D7, E67, and D140.

The protein belongs to the RuvC family. Homodimer which binds Holliday junction (HJ) DNA. The HJ becomes 2-fold symmetrical on binding to RuvC with unstacked arms; it has a different conformation from HJ DNA in complex with RuvA. In the full resolvosome a probable DNA-RuvA(4)-RuvB(12)-RuvC(2) complex forms which resolves the HJ. The cofactor is Mg(2+).

It localises to the cytoplasm. The catalysed reaction is Endonucleolytic cleavage at a junction such as a reciprocal single-stranded crossover between two homologous DNA duplexes (Holliday junction).. Functionally, the RuvA-RuvB-RuvC complex processes Holliday junction (HJ) DNA during genetic recombination and DNA repair. Endonuclease that resolves HJ intermediates. Cleaves cruciform DNA by making single-stranded nicks across the HJ at symmetrical positions within the homologous arms, yielding a 5'-phosphate and a 3'-hydroxyl group; requires a central core of homology in the junction. The consensus cleavage sequence is 5'-(A/T)TT(C/G)-3'. Cleavage occurs on the 3'-side of the TT dinucleotide at the point of strand exchange. HJ branch migration catalyzed by RuvA-RuvB allows RuvC to scan DNA until it finds its consensus sequence, where it cleaves and resolves the cruciform DNA. The protein is Crossover junction endodeoxyribonuclease RuvC of Clostridioides difficile (strain 630) (Peptoclostridium difficile).